Here is a 136-residue protein sequence, read N- to C-terminus: Small ribosomal subunit protein uS12 (136 aa).

At Asp-89 the chain carries 3-methylthioaspartic acid. The tract at residues 104 to 136 (TAGVNGRTQRRSKYGAKRPKPGQAAAAAKGKKK) is disordered. Positions 111 to 123 (TQRRSKYGAKRPK) are enriched in basic residues. A compositionally biased stretch (low complexity) spans 124 to 136 (PGQAAAAAKGKKK).

This sequence belongs to the universal ribosomal protein uS12 family. Part of the 30S ribosomal subunit. Contacts proteins S8 and S17. May interact with IF1 in the 30S initiation complex.

Functionally, with S4 and S5 plays an important role in translational accuracy. Its function is as follows. Interacts with and stabilizes bases of the 16S rRNA that are involved in tRNA selection in the A site and with the mRNA backbone. Located at the interface of the 30S and 50S subunits, it traverses the body of the 30S subunit contacting proteins on the other side and probably holding the rRNA structure together. The combined cluster of proteins S8, S12 and S17 appears to hold together the shoulder and platform of the 30S subunit. The polypeptide is Small ribosomal subunit protein uS12 (Parabacteroides distasonis (strain ATCC 8503 / DSM 20701 / CIP 104284 / JCM 5825 / NCTC 11152)).